A 211-amino-acid chain; its full sequence is MTSQRTRERLIQRLYEEGLSNAHVLEVIRRTPRHLFVDEALSHRAYEDTALPIGHNQTISQPFMVARMTELLLAAGPLDKVMEIGTGSGYQTAVLAQLVERVFSVERIQALQDKAKERLAELNLRNVVFRWGDGWEGWSALAPYNGIIVTAAATEVPQSLLDQLAPGGRLVIPVGGGEVQQLMLIVRTEDGFSRQVLDSVRFVPLLNGPIA.

Ser60 is an active-site residue.

The protein belongs to the methyltransferase superfamily. L-isoaspartyl/D-aspartyl protein methyltransferase family.

The protein resides in the cytoplasm. The catalysed reaction is [protein]-L-isoaspartate + S-adenosyl-L-methionine = [protein]-L-isoaspartate alpha-methyl ester + S-adenosyl-L-homocysteine. Its function is as follows. Catalyzes the methyl esterification of L-isoaspartyl residues in peptides and proteins that result from spontaneous decomposition of normal L-aspartyl and L-asparaginyl residues. It plays a role in the repair and/or degradation of damaged proteins. The polypeptide is Protein-L-isoaspartate O-methyltransferase (Pseudomonas aeruginosa (strain LESB58)).